The following is a 197-amino-acid chain: Protein jagunal (197 aa).

Topologically, residues 1–39 (MATRGGPMVAGTDGNDFEFRQRVAGTYQISLLNKSRLKY) are cytoplasmic. A helical transmembrane segment spans residues 40 to 60 (CIFFHALLFFVMLAKLTSDIL). The Lumenal segment spans residues 61 to 78 (DRLDIFVLEIEELEVPSP). A helical membrane pass occupies residues 79–99 (LWWEYVWAGSLLTSFLGLSAA). Residues 100–109 (RGNKVREMQK) lie on the Cytoplasmic side of the membrane. A helical transmembrane segment spans residues 110 to 130 (YMIAILVFAILPLLYCFAYYF). The Lumenal segment spans residues 131–159 (SDVWEFATMDKSVELDETDIFIWRGYPYG). Residues 160-180 (VFWYAFCFVGFQVHGFTLYFA) form a helical membrane-spanning segment. The Cytoplasmic portion of the chain corresponds to 181–197 (YNLVKVWKARTATRKFQ).

The protein belongs to the jagunal family.

It is found in the endoplasmic reticulum membrane. Its function is as follows. Required for endoplasmic reticulum organization and proper vesicular traffic during vitellogenesis. Required for oocyte and bristle growth. In Drosophila pseudoobscura pseudoobscura (Fruit fly), this protein is Protein jagunal.